A 419-amino-acid polypeptide reads, in one-letter code: F-box/FBD/LRR-repeat protein At4g26340 (419 aa).

The region spanning 1-53 (MDRISQLSDDLLLQILSFIPGKDVVATSLLSKRWQSLWMLVSELEYDDSYHTG) is the F-box domain. LRR repeat units follow at residues 55 to 81 (YKSFSQFVYRSLLSNNAPVIKHLHLNL), 132 to 159 (TLRLINFVLLDVPSSVCLPSLKVLHLKT), 160 to 185 (VDYEDDASLPSLLFGCPNLEELFVER), 187 to 208 (DQDLEMDVTFVVPSLRRLSMID), 226 to 253 (YLNITDDAVYDVRQIENMPELVEAHVDI), 254 to 284 (TQGVTHKFLRALTSVRQLSLCLSLSEVMCPS), and 299 to 324 (VVKGWWDLLTSMLQDSPKLQSLKLID). The 51-residue stretch at 339–389 (GWKLPSSVPECLLFSLEAFEWIGYKGRRGDREVATYVLKNAACLRTAKFSP) folds into the FBD domain.

This Arabidopsis thaliana (Mouse-ear cress) protein is F-box/FBD/LRR-repeat protein At4g26340.